We begin with the raw amino-acid sequence, 383 residues long: MINEDIDILSLDNKIKLHFESEIQKYKRYNERLLCIENLLKIENLRPKIFLDLLMDKKYLEKKLVNLSNLDLYSIETSDIIHRYLTIINTPLNIEVALTSQKPTEINNLVLKRRETVQEFIKVAKSYLTEPLLKSLQLMGNFGKEDLLNSIPVVCTCGNDKDFYKDDDIYICQLCNAETVKLLNSSSVNDGGRINVCNKYTYDRKVHFKDCINQYQGKQNTNINPRIYDELEEQLVNHQIIEPANKKDKFGNPISQSKRFKIVTRAHILFFLKELGYTKHYEDTILIHYTLTGKRPDNIEHLEEKLMADFDKLTEQYDLLFKDIERKNFINTQYVLFQLLRKHGYNCNKDDFAVLKTTERKACHDDICKTLFDALGWKYMFVM.

It belongs to the IIV-6 282R family.

In terms of biological role, transcription activation. The polypeptide is Putative transcription factor 282R (Acheta domesticus (House cricket)).